An 84-amino-acid polypeptide reads, in one-letter code: Cell division topological specificity factor (84 aa).

The protein belongs to the MinE family.

Its function is as follows. Prevents the cell division inhibition by proteins MinC and MinD at internal division sites while permitting inhibition at polar sites. This ensures cell division at the proper site by restricting the formation of a division septum at the midpoint of the long axis of the cell. The chain is Cell division topological specificity factor from Paraburkholderia phytofirmans (strain DSM 17436 / LMG 22146 / PsJN) (Burkholderia phytofirmans).